Here is a 411-residue protein sequence, read N- to C-terminus: Phospholipase ABHD3 (411 aa).

The chain crosses the membrane as a helical; Signal-anchor for type II membrane protein span at residues 25-45; that stretch reads VGFFGSGVGLSLILGFSVAYA. Positions 140 to 233 constitute an AB hydrolase-1 domain; the sequence is PTILLLPGLT…MLLLNYLGKI (94 aa). Residues Ser-220, Asp-346, and His-375 each act as charge relay system in the active site.

This sequence belongs to the AB hydrolase superfamily. AB hydrolase 4 family. In terms of tissue distribution, widely expressed with higher expression in liver.

Its subcellular location is the membrane. It catalyses the reaction a 1,2-diacyl-sn-glycero-3-phosphocholine + H2O = a 1-acyl-sn-glycero-3-phosphocholine + a fatty acid + H(+). The enzyme catalyses a 1,2-diacyl-sn-glycero-3-phosphocholine + H2O = a 2-acyl-sn-glycero-3-phosphocholine + a fatty acid + H(+). It carries out the reaction 1-tetradecanoyl-2-(9Z,12Z-octadecadienoyl)-sn-glycero-3-phosphocholine + H2O = 2-(9Z,12Z-octadecadienoyl)-sn-glycero-3-phosphocholine + tetradecanoate + H(+). The catalysed reaction is 1-tetradecanoyl-2-(9Z,12Z-octadecadienoyl)-sn-glycero-3-phosphocholine + H2O = 1-tetradecanoyl-sn-glycero-3-phosphocholine + (9Z,12Z)-octadecadienoate + H(+). It catalyses the reaction 1-tetradecanoyl-2-(5Z,8Z,11Z,14Z-eicosatetraenoyl)-sn-glycero-3-phosphocholine + H2O = 2-(5Z,8Z,11Z,14Z)-eicosatetraenoyl-sn-glycero-3-phosphocholine + tetradecanoate + H(+). The enzyme catalyses 1-tetradecanoyl-2-(4Z,7Z,10Z,13Z,16Z,19Z-docosahexaenoyl)-sn-glycero-3-phosphocholine + H2O = 2-(4Z,7Z,10Z,13Z,16Z,19Z-docosahexaenoyl)-sn-glycero-3-phosphocholine + tetradecanoate + H(+). It carries out the reaction 1,2-ditetradecanoyl-sn-glycero-3-phosphocholine + H2O = 2-tetradecanoyl-sn-glycero-3-phosphocholine + tetradecanoate + H(+). The catalysed reaction is 1-octadecanoyl-2-acetyl-sn-glycero-3-phosphocholine + H2O = 1-octadecanoyl-sn-glycero-3-phosphocholine + acetate + H(+). It catalyses the reaction 1,2-ditetradecanoyl-sn-glycero-3-phosphocholine + H2O = 1-tetradecanoyl-sn-glycero-3-phosphocholine + tetradecanoate + H(+). The enzyme catalyses 1-octadecanoyl-2-pentanoyl-sn-glycero-3-phosphocholine + H2O = pentanoate + 1-octadecanoyl-sn-glycero-3-phosphocholine + H(+). It carries out the reaction 1-octadecanoyl-2-hexanoyl-sn-glycero-3-phosphocholine + H2O = hexanoate + 1-octadecanoyl-sn-glycero-3-phosphocholine + H(+). The catalysed reaction is 1-octadecanoyl-2-octanoyl-sn-glycero-3-phosphocholine + H2O = 1-octadecanoyl-sn-glycero-3-phosphocholine + octanoate + H(+). It catalyses the reaction 1-octadecanoyl-2-nonanoyl-sn-glycero-3-phosphocholine + H2O = nonanoate + 1-octadecanoyl-sn-glycero-3-phosphocholine + H(+). The enzyme catalyses 1-O-hexadecyl-2-nonadioyl-sn-glycero-3-phosphocholine + H2O = nonanedioate + 1-O-hexadecyl-sn-glycero-3-phosphocholine + H(+). It carries out the reaction 1-hexadecanoyl-2-nonadioyl-sn-glycero-3-phosphocholine + H2O = nonanedioate + 1-hexadecanoyl-sn-glycero-3-phosphocholine + H(+). The catalysed reaction is 1-hexadecanoyl-2-(9-oxononanoyl)-sn-glycero-3-phosphocholine + H2O = 9-oxononanoate + 1-hexadecanoyl-sn-glycero-3-phosphocholine + H(+). It catalyses the reaction 1-hexadecanoyl-2-(5-oxopentanoyl)-sn-glycero-3-phosphocholine + H2O = 5-oxopentanoate + 1-hexadecanoyl-sn-glycero-3-phosphocholine + H(+). The enzyme catalyses 1-hexadecanoyl-2-glutaroyl-sn-glycero-3-phosphocholine + H2O = glutarate + 1-hexadecanoyl-sn-glycero-3-phosphocholine + H(+). It carries out the reaction 1-O-hexadecyl-2-acetyl-sn-glycero-3-phosphocholine + H2O = 1-O-hexadecyl-sn-glycero-3-phosphocholine + acetate + H(+). Its function is as follows. Phospholipase that may play a role in phospholipids remodeling. May selectively cleave myristate (C14)-containing phosphatidylcholines through its predominant phospholipase 1 activity, cleaving preferentially acyl groups in sn1 position. In parallel, may have a minor phospholipase 2 activity acting on acyl groups in position sn2. In addition to (C14)-containing phosphatidylcholines, may also act on other medium-chain-containing and oxidatively truncated phospholipids. In Mus musculus (Mouse), this protein is Phospholipase ABHD3.